The following is an 890-amino-acid chain: UPF0182 protein Ppro_2689 (890 aa).

Transmembrane regions (helical) follow at residues F6 to F26, A50 to L70, L102 to W122, T157 to Y177, L200 to F220, T244 to W264, and G266 to I286.

The protein belongs to the UPF0182 family.

It is found in the cell membrane. This Pelobacter propionicus (strain DSM 2379 / NBRC 103807 / OttBd1) protein is UPF0182 protein Ppro_2689.